Reading from the N-terminus, the 725-residue chain is Glutamine-dependent NAD(+) synthetase (725 aa).

The CN hydrolase domain occupies 4–274; the sequence is LKVATCNLNQ…VEVIISQVDL (271 aa). E44 serves as the catalytic Proton acceptor; for glutaminase activity. The active-site For glutaminase activity is the K113. C174 functions as the Nucleophile; for glutaminase activity in the catalytic mechanism. A ligase region spans residues 324–709; it reads YHSPQEEIAF…FPEEEANSNK (386 aa). 354 to 361 contacts ATP; sequence PLSGGADS. S356 is an active-site residue.

It in the C-terminal section; belongs to the NAD synthetase family.

The catalysed reaction is deamido-NAD(+) + L-glutamine + ATP + H2O = L-glutamate + AMP + diphosphate + NAD(+) + H(+). It participates in cofactor biosynthesis; NAD(+) biosynthesis; NAD(+) from deamido-NAD(+) (L-Gln route): step 1/1. The protein is Glutamine-dependent NAD(+) synthetase of Arabidopsis thaliana (Mouse-ear cress).